Reading from the N-terminus, the 404-residue chain is Acetate kinase (404 aa).

Asn7 lines the Mg(2+) pocket. An ATP-binding site is contributed by Lys14. Arg95 contributes to the substrate binding site. Residue Asp152 is the Proton donor/acceptor of the active site. ATP-binding positions include 212–216 (HLGNG), 286–288 (DMR), and 334–338 (GIGEN). Glu388 is a Mg(2+) binding site.

The protein belongs to the acetokinase family. Homodimer. Mg(2+) is required as a cofactor. The cofactor is Mn(2+).

Its subcellular location is the cytoplasm. The catalysed reaction is acetate + ATP = acetyl phosphate + ADP. It functions in the pathway metabolic intermediate biosynthesis; acetyl-CoA biosynthesis; acetyl-CoA from acetate: step 1/2. Catalyzes the formation of acetyl phosphate from acetate and ATP. Can also catalyze the reverse reaction. The protein is Acetate kinase of Lawsonia intracellularis (strain PHE/MN1-00).